Here is a 177-residue protein sequence, read N- to C-terminus: Non-specific lipid transfer protein GPI-anchored 22 (177 aa).

The first 29 residues, 1–29, serve as a signal peptide directing secretion; that stretch reads MARFMAYNQNPQMLALCITVAVMFLGVRS. 4 disulfides stabilise this stretch: cysteine 38-cysteine 81, cysteine 48-cysteine 63, cysteine 64-cysteine 108, and cysteine 79-cysteine 117. N-linked (GlcNAc...) asparagine glycosylation is present at asparagine 113. A lipid anchor (GPI-anchor amidated serine) is attached at serine 152. Residues 153 to 177 constitute a propeptide, removed in mature form; sequence SSIKGRDNKQFGLMMAGALSIWYIM.

It belongs to the plant LTP family. Expressed in seedlings, preferentially in hypocotyls and roots. Also observed in siliques.

The protein resides in the cell membrane. Probable lipid transfer protein. This Arabidopsis thaliana (Mouse-ear cress) protein is Non-specific lipid transfer protein GPI-anchored 22.